Here is a 579-residue protein sequence, read N- to C-terminus: Potassium-transporting ATPase potassium-binding subunit (579 aa).

10 helical membrane-spanning segments follow: residues 2 to 22 (MNLV…AIPL), 66 to 86 (SFSV…LHIF), 135 to 155 (GLTV…FALI), 177 to 197 (VLYI…SQGV), 260 to 280 (TILS…ALCF), 292 to 312 (GIAI…IVGV), 391 to 411 (VFGG…LAVF), 437 to 457 (VLVC…ASIL), 490 to 510 (FAGF…SMIF), and 546 to 566 (FIGL…FPAL).

Belongs to the KdpA family. The system is composed of three essential subunits: KdpA, KdpB and KdpC.

The protein localises to the cell membrane. Part of the high-affinity ATP-driven potassium transport (or Kdp) system, which catalyzes the hydrolysis of ATP coupled with the electrogenic transport of potassium into the cytoplasm. This subunit binds the extracellular potassium ions and delivers the ions to the membrane domain of KdpB through an intramembrane tunnel. The polypeptide is Potassium-transporting ATPase potassium-binding subunit (Clostridium botulinum (strain Eklund 17B / Type B)).